The primary structure comprises 494 residues: MSGRSYQVRTFGCQMNVHDSERLAGLLESAGYVPAPEGSDADVVVFNTCAVRENADNRLYGNLGHLYPAKKSNPAMQIAVGGCLAQKDRSVILDRAPWVDVVFGTHNIHRLPVLLERARHNSAAQVEIAEALEVFPSSLPARRASHHSAWVSISVGCDNTCTFCIVPSLRGGERDRRPGDVLAEVEALVAEGALEITLLGQNVNSYGRSLGDPGAFAKLLRACGRVEGLERVRFTSPHPRDFTDDVIEAMAQTPNVCPQLHMPLQSGSDVVLRRMRRSYRRERFLGIVERVRAAMPDAAITTDIIVGFPGETEADFADTLDVVRTARFAGAFTFKYSPRPGTPAAEMDGAVDPAVVSERYGRLASLQDEMSWAENRAQVGRRVEIVVAEGEGRKDSATGRLSGRARDGRLVHLLVTGPHAQEGLVRPGDVVETVVTRGAPHHLTADGPLLTHRRTRAGDAWAAGRAIAGDTPRPDRPAVSLGMPQLRPSAPAAR.

The region spanning 4 to 120 is the MTTase N-terminal domain; it reads RSYQVRTFGC…LPVLLERARH (117 aa). Residues Cys-13, Cys-49, Cys-83, Cys-157, Cys-161, and Cys-164 each coordinate [4Fe-4S] cluster. One can recognise a Radical SAM core domain in the interval 143 to 374; sequence RASHHSAWVS…SLQDEMSWAE (232 aa). One can recognise a TRAM domain in the interval 376–449; sequence RAQVGRRVEI…PHHLTADGPL (74 aa). The tract at residues 465 to 494 is disordered; it reads RAIAGDTPRPDRPAVSLGMPQLRPSAPAAR.

This sequence belongs to the methylthiotransferase family. MiaB subfamily. As to quaternary structure, monomer. It depends on [4Fe-4S] cluster as a cofactor.

The protein resides in the cytoplasm. The enzyme catalyses N(6)-dimethylallyladenosine(37) in tRNA + (sulfur carrier)-SH + AH2 + 2 S-adenosyl-L-methionine = 2-methylsulfanyl-N(6)-dimethylallyladenosine(37) in tRNA + (sulfur carrier)-H + 5'-deoxyadenosine + L-methionine + A + S-adenosyl-L-homocysteine + 2 H(+). In terms of biological role, catalyzes the methylthiolation of N6-(dimethylallyl)adenosine (i(6)A), leading to the formation of 2-methylthio-N6-(dimethylallyl)adenosine (ms(2)i(6)A) at position 37 in tRNAs that read codons beginning with uridine. In Parafrankia sp. (strain EAN1pec), this protein is tRNA-2-methylthio-N(6)-dimethylallyladenosine synthase.